We begin with the raw amino-acid sequence, 293 residues long: NAD kinase (293 aa).

Asp-74 acts as the Proton acceptor in catalysis. NAD(+) is bound by residues 74–75 (DG), 148–149 (NE), His-159, Arg-176, Asp-178, Thr-186, 189–194 (TAYSLS), and Gln-248.

Belongs to the NAD kinase family. In terms of assembly, homodimer. Requires a divalent metal cation as cofactor.

It localises to the cytoplasm. The enzyme catalyses NAD(+) + ATP = ADP + NADP(+) + H(+). Its function is as follows. Involved in the regulation of the intracellular balance of NAD and NADP, and is a key enzyme in the biosynthesis of NADP. Catalyzes specifically the phosphorylation on 2'-hydroxyl of the adenosine moiety of NAD to yield NADP. The sequence is that of NAD kinase from Yersinia pestis.